The following is a 556-amino-acid chain: MSESTNNPNEKTYKINLVKGTKKWNIAKFSNKIDLSSFSKPVRMYKFNPIANMINNESNNFGQPTTSTYTNNHYSYKNIQPTMTSAPNGTNSTGTTPNTTTTTTTTTTTTTTTTTAAGTPGAPNPAAATQPFVRKKRYEAKPVNPKTIPWKLEDSEGNNTYQGNVEGNQASSNYFLFMFQSDGSIKAVPCNDWYNFRPKKEFQSLTTEEAEDFMKKKNQEWDVFTSRLQKKTDPSGSGSGGSESSGKKSIEELEEAEHRNRNEDPNRYKTTNEEKKKKKAPARRREREDEGNGEDGDAPDFESKFDDDDDDTYMDGDGLTGEDENQIEEDEEEEDVDLTEGGLEMKKMIKKQQQQNDSEDDLADDDDKKDNNGGTGGGDDEDDDEDDEDPDQDDLSNLPKVFGKSNADGTTNSSVKKEDDGGKDSKSSKKSKKKDKDSSPKSKEKKSKKNKSDSSVDNRESKKIKKEPSSPQAVQPNSPSQQQQQQQQNIDPNDPPFTEEYIKIVLQKSKKVKSLDLINIFKGPLKNPDNKPIFLAMVHNVARVVEENGVKYLIPK.

Disordered stretches follow at residues 82 to 128 (TMTS…PAAA) and 226 to 499 (SRLQ…PFTE). Low complexity predominate over residues 84–128 (TSAPNGTNSTGTTPNTTTTTTTTTTTTTTTTTAAGTPGAPNPAAA). A compositionally biased stretch (basic and acidic residues) spans 245–275 (SGKKSIEELEEAEHRNRNEDPNRYKTTNEEK). Composition is skewed to acidic residues over residues 291 to 338 (GNGE…DVDL) and 378 to 394 (GDDE…DQDD). Basic and acidic residues-rich tracts occupy residues 415 to 427 (VKKE…DSKS) and 450 to 461 (NKSDSSVDNRES). Over residues 469-492 (SSPQAVQPNSPSQQQQQQQQNIDP) the composition is skewed to low complexity.

It belongs to the TFIIF alpha subunit family. As to quaternary structure, heterodimer of an alpha and a beta subunit.

The protein localises to the nucleus. Functionally, TFIIF is a general transcription initiation factor that binds to RNA polymerase II and helps to recruit it to the initiation complex in collaboration with TFIIB. It promotes transcription elongation. The polypeptide is General transcription factor IIF subunit 1 (gtf2f1) (Dictyostelium discoideum (Social amoeba)).